We begin with the raw amino-acid sequence, 180 residues long: NADH-quinone oxidoreductase subunit I (180 aa).

2 consecutive 4Fe-4S ferredoxin-type domains span residues 48-80 and 90-119; these read IVLTRDPDGDERCVACNLCAVACPVGCISLQKS and EFFRINFSRCIFCGLCEEACPTTAIQLTPD. [4Fe-4S] cluster-binding residues include cysteine 60, cysteine 63, cysteine 66, cysteine 70, cysteine 99, cysteine 102, cysteine 105, and cysteine 109. Positions 161 to 174 are enriched in basic and acidic residues; it reads KPKGDAENEAKPID. The disordered stretch occupies residues 161 to 180; the sequence is KPKGDAENEAKPIDVKSLLP.

Belongs to the complex I 23 kDa subunit family. NDH-1 is composed of 13 different subunits. Subunits NuoA, H, J, K, L, M, N constitute the membrane sector of the complex. Requires [4Fe-4S] cluster as cofactor.

It is found in the cell inner membrane. The catalysed reaction is a quinone + NADH + 5 H(+)(in) = a quinol + NAD(+) + 4 H(+)(out). In terms of biological role, NDH-1 shuttles electrons from NADH, via FMN and iron-sulfur (Fe-S) centers, to quinones in the respiratory chain. The immediate electron acceptor for the enzyme in this species is believed to be ubiquinone. Couples the redox reaction to proton translocation (for every two electrons transferred, four hydrogen ions are translocated across the cytoplasmic membrane), and thus conserves the redox energy in a proton gradient. The polypeptide is NADH-quinone oxidoreductase subunit I (Shewanella oneidensis (strain ATCC 700550 / JCM 31522 / CIP 106686 / LMG 19005 / NCIMB 14063 / MR-1)).